The following is a 349-amino-acid chain: Phosphoribosylformylglycinamidine cyclo-ligase (349 aa).

This sequence belongs to the AIR synthase family.

Its subcellular location is the cytoplasm. The catalysed reaction is 2-formamido-N(1)-(5-O-phospho-beta-D-ribosyl)acetamidine + ATP = 5-amino-1-(5-phospho-beta-D-ribosyl)imidazole + ADP + phosphate + H(+). It participates in purine metabolism; IMP biosynthesis via de novo pathway; 5-amino-1-(5-phospho-D-ribosyl)imidazole from N(2)-formyl-N(1)-(5-phospho-D-ribosyl)glycinamide: step 2/2. The polypeptide is Phosphoribosylformylglycinamidine cyclo-ligase (Lactobacillus delbrueckii subsp. bulgaricus (strain ATCC BAA-365 / Lb-18)).